The primary structure comprises 444 residues: ATP-dependent protease ATPase subunit HslU (444 aa).

ATP contacts are provided by residues Ile-18 and 60–65; that span reads GVGKTE. The interval 143-163 is disordered; it reads WGEVENHDSHSSTRQAFRKKL. 3 residues coordinate ATP: Asp-257, Glu-322, and Arg-394.

It belongs to the ClpX chaperone family. HslU subfamily. In terms of assembly, a double ring-shaped homohexamer of HslV is capped on each side by a ring-shaped HslU homohexamer. The assembly of the HslU/HslV complex is dependent on binding of ATP.

It localises to the cytoplasm. Functionally, ATPase subunit of a proteasome-like degradation complex; this subunit has chaperone activity. The binding of ATP and its subsequent hydrolysis by HslU are essential for unfolding of protein substrates subsequently hydrolyzed by HslV. HslU recognizes the N-terminal part of its protein substrates and unfolds these before they are guided to HslV for hydrolysis. The chain is ATP-dependent protease ATPase subunit HslU from Haemophilus influenzae (strain 86-028NP).